The chain runs to 307 residues: Probable transposase for transposon Tn903 (307 aa).

Functionally, required for transposition of transposon Tn903. This Escherichia coli protein is Probable transposase for transposon Tn903.